The chain runs to 207 residues: Transcription factor bHLH149 (207 aa).

A disordered region spans residues 1–25 (MVESLFPSIENTGESSRRKKPRISE). Positions 132 to 181 (KSRKGLTETNRIKLPAVERKLKILGRLVPGCRKVSVPNLLDEATDYIAAL) constitute a bHLH domain.

In terms of assembly, homodimer. Interacts with PRE3.

It localises to the nucleus. Functionally, atypical bHLH transcription factor probably unable to bind DNA. Negatively regulates brassinosteroid signaling. The chain is Transcription factor bHLH149 (BHLH149) from Arabidopsis thaliana (Mouse-ear cress).